The chain runs to 453 residues: Homeobox protein meis3 (453 aa).

Residues 33–64 (HHSLSQSAPYGSTGAAHRVPMPPGMGSNDGLK) form a disordered region. The region spanning 102–185 (GGDVCSSDSF…PIDLVIDDRD (84 aa)) is the MEIS N-terminal domain. The interval 192-272 (LEDFTGSCTS…RDKKRNKKRG (81 aa)) is disordered. The span at 197–209 (GSCTSLSDQNNSW) shows a compositional bias: polar residues. A compositionally biased stretch (low complexity) spans 218-230 (STHSGTPGPSSGG). Residues 231-242 (LASQSGDNSSEQ) show a composition bias toward polar residues. A DNA-binding region (homeobox) is located at residues 267 to 329 (RNKKRGIFPK…NARRRIVQPM (63 aa)).

This sequence belongs to the TALE/MEIS homeobox family.

It localises to the nucleus. Functionally, a caudalizing protein which is required to pattern the anterior/posterior (A/P) axis during central nervous system (CNS) formation. Inhibits anterior neural expression and acts as a transcriptional activator to induce posterior neural gene expression. Maintains a proper A/P balance required for hindbrain formation by activating the FGF/MAPK pathway, which modulates the planar cell polarity (PCP) pathway. Interacts with retinoid signaling during hindbrain patterning. This chain is Homeobox protein meis3, found in Xenopus tropicalis (Western clawed frog).